The primary structure comprises 166 residues: Endoribonuclease YbeY (166 aa).

Zn(2+) is bound by residues His132, His136, and His142.

It belongs to the endoribonuclease YbeY family. It depends on Zn(2+) as a cofactor.

It localises to the cytoplasm. Functionally, single strand-specific metallo-endoribonuclease involved in late-stage 70S ribosome quality control and in maturation of the 3' terminus of the 16S rRNA. The polypeptide is Endoribonuclease YbeY (Clostridium botulinum (strain Loch Maree / Type A3)).